Consider the following 304-residue polypeptide: Bifunctional protein FolD (304 aa).

Residues 167–169, Ser192, and Ile233 contribute to the NADP(+) site; that span reads GRS.

Belongs to the tetrahydrofolate dehydrogenase/cyclohydrolase family. As to quaternary structure, homodimer.

The enzyme catalyses (6R)-5,10-methylene-5,6,7,8-tetrahydrofolate + NADP(+) = (6R)-5,10-methenyltetrahydrofolate + NADPH. The catalysed reaction is (6R)-5,10-methenyltetrahydrofolate + H2O = (6R)-10-formyltetrahydrofolate + H(+). Its pathway is one-carbon metabolism; tetrahydrofolate interconversion. Catalyzes the oxidation of 5,10-methylenetetrahydrofolate to 5,10-methenyltetrahydrofolate and then the hydrolysis of 5,10-methenyltetrahydrofolate to 10-formyltetrahydrofolate. This Rhodospirillum centenum (strain ATCC 51521 / SW) protein is Bifunctional protein FolD.